A 678-amino-acid polypeptide reads, in one-letter code: uncharacterized protein (678 aa).

Disordered stretches follow at residues 123–156 and 381–417; these read TPLS…TDSV and TETT…TEHS.

Its subcellular location is the cytoplasm. This is an uncharacterized protein from Schizosaccharomyces pombe (strain 972 / ATCC 24843) (Fission yeast).